Here is a 288-residue protein sequence, read N- to C-terminus: MTSFTVSPPPHIKKKIFIKNLIWSRIVALLPISAAAVYFFGFAALGNIIASILGAVGIEFVIQKAFNKKLTIMDGNAIYLGLLLALICPPTLPAWMIFIGGAFAVGVGKHAFGGIGSYTFHPSLAAWVFLSLAWAQDMLPGTIPILSSFSDLILENGAGFLTDVSPILVLLAGVILILVKYIEWRIPLSYLLTTVILALVLGDPLAYVVSGTFLLGVFFIATETVTSPVTQNGRIVYGILCGFLTVIYGYFSGNYVWGTLYALLLSNAVAPFIELKTLPKPMGGVANE.

The next 9 helical transmembrane spans lie at 26–46, 47–67, 80–100, 101–121, 126–146, 159–179, 200–220, 235–255, and 256–276; these read IVALLPISAAAVYFFGFAALG, NIIASILGAVGIEFVIQKAFN, LGLLLALICPPTLPAWMIFIG, GAFAVGVGKHAFGGIGSYTFH, AWVFLSLAWAQDMLPGTIPIL, GFLTDVSPILVLLAGVILILV, VLGDPLAYVVSGTFLLGVFFI, IVYGILCGFLTVIYGYFSGNY, and VWGTLYALLLSNAVAPFIELK.

This sequence belongs to the NqrB/RnfD family. In terms of assembly, the Rnf complex is probably composed of eight subunits, including RnfA, RnfB, RnfC, RnfD, RnfE and RnfG. FMN is required as a cofactor.

The protein resides in the cell membrane. Part of a membrane-bound complex that couples electron transfer with translocation of ions across the membrane. Catalyzes Na(+) transport, most probably coupled to electron transfer from reduced ferredoxin to methanophenazine and heterodisulfide reductase. Involved in heterodisulfide reduction during methanogenesis from acetate. This Methanosarcina acetivorans (strain ATCC 35395 / DSM 2834 / JCM 12185 / C2A) protein is Ion-translocating oxidoreductase complex subunit D.